A 5538-amino-acid chain; its full sequence is Leashin (5538 aa).

Positions 1–10 (MFRALMGGGR) are enriched in gly residues. Disordered regions lie at residues 1–270 (MFRA…SSMG), 286–315 (EVDPAPGRPDRPTAGTTSEPPKPSNTTFGI), 331–365 (LPLPASPTSPPEPVPTTAPYAPPVTSSTTKPPHTH), 510–555 (SRDA…KKSS), 596–712 (TESV…DISQ), 800–901 (AATS…FPTG), 913–944 (ALASTQDRDSRLPRQHASSSSGSLQHVAPVPT), 1027–1145 (NRPH…KDSF), 1164–1297 (VLSG…GYRD), 1310–1398 (PTPP…RYVS), 1432–1993 (EDPT…TSVE), 2067–2146 (SELL…VNAF), 2165–2207 (NRLS…SPPA), 2233–3065 (PEAA…SQPI), 3077–3894 (MAEE…EIVS), 3910–4034 (EEKA…DTGL), 4072–4128 (KFKQ…EEPL), 4238–4421 (EAAL…SNQA), 4442–4463 (PRPLEVEPAASEVYQGATDEND), 4509–4698 (LRRQ…TSNT), 4733–4850 (KTDG…VEQA), and 4910–5052 (ALTV…RHRR). The tract at residues 1-1100 (MFRALMGGGR…RASGVQLIDR (1100 aa)) is woronin bodies-binding region. The span at 14 to 23 (SRSTTSSSKS) shows a compositional bias: low complexity. Composition is skewed to basic and acidic residues over residues 42–51 (SRGDDRDRGL) and 89–167 (VEHD…ERSR). Over residues 299-313 (AGTTSEPPKPSNTTF) the composition is skewed to polar residues. Over residues 334 to 352 (PASPTSPPEPVPTTAPYAP) the composition is skewed to pro residues. Residues 514–523 (PRKHHYRQRR) show a composition bias toward basic residues. The segment covering 598-607 (SVSTARRSQT) has biased composition (polar residues). A compositionally biased stretch (basic residues) spans 639-655 (HRSRSRSHSSSRNRRHS). Low complexity predominate over residues 660 to 674 (AAVGAAVGSGAIALA). Basic residues predominate over residues 682–698 (SRSRSRSRFPRKSKGRK). A compositionally biased stretch (basic and acidic residues) spans 809-825 (RAGEILVAKETRSRHSD). Low complexity-rich tracts occupy residues 842 to 851 (GDQSSSSVSS) and 862 to 880 (GSDESQSSDSGTSKWGWRW). Over residues 881–891 (GSKKNKKKKRA) the composition is skewed to basic residues. Basic and acidic residues-rich tracts occupy residues 1068-1091 (LTKEQADKERRMDRLEQLKRDAER), 1098-1145 (IDRD…KDSF), 1178-1198 (SQRRHEERRQQRRAERRRGSE), 1207-1226 (SKSERAQETTDYLPEERQPE), 1356-1365 (WGEHKTHEYE), 1375-1387 (SVDHETTREREQP), 1447-1462 (GRVEYRDPWVETESKS), and 1478-1488 (EEKAPSSRVIE). Low complexity predominate over residues 1506–1516 (QESSEPQTRTS). 3 stretches are compositionally biased toward basic and acidic residues: residues 1521–1536 (VIDRLSEKQDERDGSR), 1549–1559 (GKERDESELRA), and 1572–1594 (EELRSDPKRDVDSRDDGDVDRRS). Positions 1639–1648 (KKKRRKRRSK) are enriched in basic residues. Basic and acidic residues-rich tracts occupy residues 1672–1686 (EKLKSMDDKDKEKKA), 1700–1773 (EPVD…QRRE), and 1788–1800 (KSGEYEKDRKLSE). Composition is skewed to low complexity over residues 1867–1876 (PAPRSRSRPA) and 1889–1898 (SQSSRRSSIL). A compositionally biased stretch (basic and acidic residues) spans 1950 to 1975 (KNSREMRPLWLVERHGPGHGEHKLEE). Composition is skewed to polar residues over residues 1984 to 1993 (KTSSANTSVE) and 2121 to 2130 (TPQNNVTAAS). Composition is skewed to basic and acidic residues over residues 2187–2196 (DADRTHKPIA), 2269–2279 (VPRDDKRRDSV), and 2307–2320 (GENKELPSEAKNEN). Positions 2321–2331 (ANDNSQAQTEQ) are enriched in polar residues. Positions 2344-2355 (AKKKKKKNKKKR) are enriched in basic residues. The span at 2358–2370 (MDSNTQEPTTPVD) shows a compositional bias: polar residues. The span at 2427–2441 (DVEKAIEAPDVRKEL) shows a compositional bias: basic and acidic residues. The span at 2449–2461 (APEDTPAEPTAET) shows a compositional bias: low complexity. Residues 2473 to 2484 (KKSKKKKKKKNK) show a composition bias toward basic residues. The segment covering 2494–2525 (DPASTETPEASAANSQVVAAEQVESTLETTQP) has biased composition (polar residues). Basic and acidic residues-rich tracts occupy residues 2580 to 2590 (NQAKELPHPEE), 2647 to 2661 (PEDKNGEAEQADLKS), and 2677 to 2691 (ALDKELSEISERPAE). Over residues 2719-2734 (EEPTPTAAELETPLSR) the composition is skewed to low complexity. Residues 2735–2747 (KNSKKNKKKNKRK) are compositionally biased toward basic residues. Residues 2796 to 2812 (DENKGESRDVQAVKEET) are compositionally biased toward basic and acidic residues. The segment covering 2874-2884 (KKKAKKKKNRK) has biased composition (basic residues). Polar residues predominate over residues 2885–2894 (TANVSESQPE). Composition is skewed to basic residues over residues 3003-3013 (KKSKKNKKKKQ) and 3089-3100 (KKTKKEKKKKRQ). Over residues 3145–3172 (AIEHAEAAAEHSQEQPNKDVTLHADHSP) the composition is skewed to basic and acidic residues. Residues 3248–3268 (PAMEGGAAAEELVAVEPDVLE) are compositionally biased toward low complexity. A compositionally biased stretch (polar residues) spans 3293 to 3303 (ELVNAETTQKT). Basic residues predominate over residues 3329 to 3341 (SKKKDKKKKKKRQ). The span at 3347–3367 (DEQRSSTKEEPTAEFSSDHVP) shows a compositional bias: basic and acidic residues. Low complexity-rich tracts occupy residues 3397 to 3409 (TQTAAEPTPSSAS) and 3422 to 3435 (ESTQEPAAEEAQTA). Basic residues predominate over residues 3436-3450 (KSKKKAKKDKKKRKS). The segment covering 3480 to 3495 (EGPKPGDKPTSPKDSS) has biased composition (basic and acidic residues). Over residues 3547 to 3564 (EEQAVVEETVAPPVVDEA) the composition is skewed to low complexity. 2 stretches are compositionally biased toward polar residues: residues 3565–3580 (SQLQEQKVSSETLWSE) and 3604–3613 (VSPSLENNEG). Basic residues-rich tracts occupy residues 3642–3652 (KSKKNKKKKKR) and 3716–3730 (KAKKKAKKKDKKRQS). Residues 3768–3787 (TFSQETSETISTEAKSSEPS) are compositionally biased toward polar residues. Basic and acidic residues predominate over residues 3800–3819 (KENQSHDTEPHGGNDKDLTW). The span at 3823–3837 (MVSSQVEQQQGTPSD) shows a compositional bias: polar residues. The segment covering 3876–3893 (DRLERSGEEGTRVKKEIV) has biased composition (basic and acidic residues). 2 stretches are compositionally biased toward polar residues: residues 3915 to 3925 (ISSQGEDTIQV) and 3965 to 3980 (KDQFTSIEVNDPSQSK). A compositionally biased stretch (acidic residues) spans 4010–4020 (TSQDDSVDAVQ). Residues 4111 to 4123 (ESRENKFKEKQLA) show a composition bias toward basic and acidic residues. Positions 4244–4255 (KNSKKKSKKAKK) are enriched in basic residues. The span at 4328 to 4345 (LGQTPNMDNQTDDVQSTE) shows a compositional bias: polar residues. Basic residues predominate over residues 4378–4391 (KLSKKDRRKAKKKS). The span at 4392 to 4406 (AKDAIEPSDEPELRN) shows a compositional bias: basic and acidic residues. A septal pore-binding region region spans residues 4495 to 5538 (AIAEFDETAI…SSTMDISNVI (1044 aa)). Over residues 4554–4570 (TEQSAGLQAKSVSSQGA) the composition is skewed to polar residues. Basic and acidic residues-rich tracts occupy residues 4574-4591 (IQDDMQHPENRLARDQTK) and 4660-4673 (EESHLQSQQDEKGP). A compositionally biased stretch (low complexity) spans 4940 to 4954 (SSVSSVKSVQSTHSV). Polar residues predominate over residues 4966–4988 (RNTSGDLRAASQAQESHGTQPHA). Residues 4989–4998 (TPQPPQPPPS) are compositionally biased toward pro residues. Positions 5050–5223 (HRRSMQHLQE…QQQIAASLHD (174 aa)) form a coiled coil.

Binds directly or indirectly to the Woronin body major protein hexA.

It is found in the cell septum. Acts as the tether and is essential for anchoring of Woronin bodies at the septal pore. In damaged hyphae, Woronin bodies occlude septal pores in order to separate intact from damaged compartments. This is Leashin from Aspergillus fumigatus (strain ATCC MYA-4609 / CBS 101355 / FGSC A1100 / Af293) (Neosartorya fumigata).